We begin with the raw amino-acid sequence, 198 residues long: MRIKQSEFIISAVKPHQYPIDHRNEVAFVGRSNVGKSSLINSLTNRKKLAKVSGTPGKTRLINFFLINNDFYLVDLPGYGYAKVSKSEKDTWGKTIETYLSHREELKRIVCLVDSRHKPTGDDIMMYEWAKHFGYDVVVVATKSDKLKNAEFKKSEKLIRETLNLTKDDKLYFYSSLNKKGTEELIDKLFLEFATDID.

An EngB-type G domain is found at 22 to 195 (HRNEVAFVGR…IDKLFLEFAT (174 aa)). Residues 30 to 37 (GRSNVGKS), 57 to 61 (GKTRL), 75 to 78 (DLPG), 142 to 145 (TKSD), and 174 to 176 (YSS) contribute to the GTP site. Mg(2+) contacts are provided by Ser-37 and Thr-59.

The protein belongs to the TRAFAC class TrmE-Era-EngA-EngB-Septin-like GTPase superfamily. EngB GTPase family. Mg(2+) is required as a cofactor.

Functionally, necessary for normal cell division and for the maintenance of normal septation. The sequence is that of Probable GTP-binding protein EngB from Clostridium botulinum (strain Eklund 17B / Type B).